A 254-amino-acid chain; its full sequence is Urease accessory protein UreF (254 aa).

Basic and acidic residues predominate over residues 1–11 (MDKGKSVKSTE). The tract at residues 1-26 (MDKGKSVKSTEKSVGMPPKTPKTDNN) is disordered.

This sequence belongs to the UreF family. In terms of assembly, ureH, UreF and UreG form a complex that acts as a GTP-hydrolysis-dependent molecular chaperone, activating the urease apoprotein by helping to assemble the nickel containing metallocenter of UreC. The UreE protein probably delivers the nickel.

The protein resides in the cytoplasm. Functionally, required for maturation of urease via the functional incorporation of the urease nickel metallocenter. In Helicobacter pylori (strain ATCC 700392 / 26695) (Campylobacter pylori), this protein is Urease accessory protein UreF.